The following is a 196-amino-acid chain: UMP-CMP kinase (196 aa).

13–18 (GAGKGT) lines the ATP pocket. A Phosphoserine modification is found at Ser-33. Residues 33 to 63 (SAGELLRDERKNPDSQYGELIEKYIKEGKIV) are NMP. Arg-39 lines the a ribonucleoside 5'-phosphate pocket. N6-acetyllysine occurs at positions 43 and 55. Residue 61 to 63 (KIV) participates in a ribonucleoside 5'-phosphate binding. Lys-73 is covalently cross-linked (Glycyl lysine isopeptide (Lys-Gly) (interchain with G-Cter in SUMO2)). 93-96 (GFPR) contributes to the a ribonucleoside 5'-phosphate binding site. Asn-100 contributes to the CMP binding site. N6-succinyllysine is present on Lys-106. The LID stretch occupies residues 133–143 (ERGKSSGRSDD). Residue Arg-134 coordinates ATP. Arg-140 and Arg-151 together coordinate a ribonucleoside 5'-phosphate. Lys-179 lines the ATP pocket. Ser-180 bears the Phosphoserine mark.

The protein belongs to the adenylate kinase family. UMP-CMP kinase subfamily. Monomer. It depends on Mg(2+) as a cofactor. In terms of tissue distribution, ubiquitously expressed.

Its subcellular location is the nucleus. It is found in the cytoplasm. It carries out the reaction CMP + ATP = CDP + ADP. The catalysed reaction is dCMP + ATP = dCDP + ADP. It catalyses the reaction UMP + ATP = UDP + ADP. The enzyme catalyses a 2'-deoxyribonucleoside 5'-diphosphate + ATP = a 2'-deoxyribonucleoside 5'-triphosphate + ADP. It carries out the reaction a ribonucleoside 5'-diphosphate + ATP = a ribonucleoside 5'-triphosphate + ADP. In terms of biological role, catalyzes the phosphorylation of pyrimidine nucleoside monophosphates at the expense of ATP. Plays an important role in de novo pyrimidine nucleotide biosynthesis. Has preference for UMP and CMP as phosphate acceptors. Also displays broad nucleoside diphosphate kinase activity. In Homo sapiens (Human), this protein is UMP-CMP kinase.